The following is a 299-amino-acid chain: Probable lipid kinase YegS (299 aa).

Residues 2–133 form the DAGKc domain; sequence AEFPASLLIL…IDMAQVNKQT (132 aa). Residues T40, 66–72, and T95 contribute to the ATP site; that span reads GDGTINE. The Mg(2+) site is built by L215, D218, and L220. The active-site Proton acceptor is the E271.

This sequence belongs to the diacylglycerol/lipid kinase family. YegS lipid kinase subfamily. Mg(2+) serves as cofactor. The cofactor is Ca(2+).

The protein resides in the cytoplasm. In terms of biological role, probably phosphorylates lipids; the in vivo substrate is unknown. The protein is Probable lipid kinase YegS of Escherichia coli O17:K52:H18 (strain UMN026 / ExPEC).